We begin with the raw amino-acid sequence, 291 residues long: 3-hydroxy-5-phosphonooxypentane-2,4-dione thiolase (291 aa).

K203 acts as the Schiff-base intermediate with substrate in catalysis.

The protein belongs to the DeoC/FbaB aldolase family. Homodecamer.

The protein resides in the cytoplasm. It catalyses the reaction dihydroxyacetone phosphate + acetyl-CoA = 3-hydroxy-2,4-dioxopentyl phosphate + CoA. Its function is as follows. Involved in the degradation of phospho-AI-2, thereby terminating induction of the lsr operon and closing the AI-2 signaling cycle. Catalyzes the transfer of an acetyl moiety from 3-hydroxy-5-phosphonooxypentane-2,4-dione to CoA to form glycerone phosphate and acetyl-CoA. The polypeptide is 3-hydroxy-5-phosphonooxypentane-2,4-dione thiolase (Escherichia coli (strain K12 / DH10B)).